Consider the following 242-residue polypeptide: Methylthioribulose-1-phosphate dehydratase (242 aa).

Positions 1-22 (MAAASGHGLELANGGDATQDKL) are disordered. Cys-97 is a substrate binding site. Zn(2+) is bound by residues His-115 and His-117. Residue Glu-139 is the Proton donor/acceptor of the active site. Residue His-195 coordinates Zn(2+).

The protein belongs to the aldolase class II family. MtnB subfamily. Zn(2+) is required as a cofactor.

The protein resides in the cytoplasm. It carries out the reaction 5-(methylsulfanyl)-D-ribulose 1-phosphate = 5-methylsulfanyl-2,3-dioxopentyl phosphate + H2O. It functions in the pathway amino-acid biosynthesis; L-methionine biosynthesis via salvage pathway; L-methionine from S-methyl-5-thio-alpha-D-ribose 1-phosphate: step 2/6. Functionally, catalyzes the dehydration of methylthioribulose-1-phosphate (MTRu-1-P) into 2,3-diketo-5-methylthiopentyl-1-phosphate (DK-MTP-1-P). Functions in the methionine salvage pathway. May play a role in apoptosis. The sequence is that of Methylthioribulose-1-phosphate dehydratase from Gallus gallus (Chicken).